The sequence spans 372 residues: DNA replication and repair protein RecF (372 aa).

30–37 contacts ATP; it reads GENAQGKT.

This sequence belongs to the RecF family.

Its subcellular location is the cytoplasm. The RecF protein is involved in DNA metabolism; it is required for DNA replication and normal SOS inducibility. RecF binds preferentially to single-stranded, linear DNA. It also seems to bind ATP. This Geobacillus kaustophilus (strain HTA426) protein is DNA replication and repair protein RecF.